The chain runs to 590 residues: Phenylalanine--tRNA ligase beta subunit (590 aa).

Residues 276–382 (MELDVWDVPV…IMYNYDRFEP (107 aa)) form the B5 domain. Residues Asn360, Asp366, Glu369, and Asp370 each coordinate Mg(2+).

The protein belongs to the phenylalanyl-tRNA synthetase beta subunit family. Type 2 subfamily. As to quaternary structure, tetramer of two alpha and two beta subunits. Mg(2+) is required as a cofactor.

The protein localises to the cytoplasm. The catalysed reaction is tRNA(Phe) + L-phenylalanine + ATP = L-phenylalanyl-tRNA(Phe) + AMP + diphosphate + H(+). The chain is Phenylalanine--tRNA ligase beta subunit from Methanopyrus kandleri (strain AV19 / DSM 6324 / JCM 9639 / NBRC 100938).